The sequence spans 265 residues: MSVKVSEYMTKKVVTVSKDNTVKDVIKLLKETGHNSFPVVENGKLIGIVSVHDIVGKDDNEKVENVMTKRKDMVVTTPDANIMDVGRIMFRTGFSKLPVVDEENNLVGIISNMDVIRSQIEKTTPKKLENIIKTYKSLGYNLRVEKEEVDVNKLRPTQNKIHADELVGRMYELKKGLAEPIIAIKTKRGDYYILVDGHHRAVAAYKMGVPKLDAYVIYLDTDKKLGIEKTAEIMNLKSLEDVKIVDSDDENSVKVIKYNKNGVLG.

CBS domains follow at residues 9–64 and 67–126; these read MTKK…EKVE and MTKR…TTPK.

This is an uncharacterized protein from Methanocaldococcus jannaschii (strain ATCC 43067 / DSM 2661 / JAL-1 / JCM 10045 / NBRC 100440) (Methanococcus jannaschii).